The following is a 151-amino-acid chain: Deoxyuridine 5'-triphosphate nucleotidohydrolase (151 aa).

Residues 70 to 72 (RSG), Asn-83, 87 to 89 (LID), and Met-97 contribute to the substrate site.

This sequence belongs to the dUTPase family. The cofactor is Mg(2+).

It catalyses the reaction dUTP + H2O = dUMP + diphosphate + H(+). It functions in the pathway pyrimidine metabolism; dUMP biosynthesis; dUMP from dCTP (dUTP route): step 2/2. This enzyme is involved in nucleotide metabolism: it produces dUMP, the immediate precursor of thymidine nucleotides and it decreases the intracellular concentration of dUTP so that uracil cannot be incorporated into DNA. In Shigella flexneri serotype 5b (strain 8401), this protein is Deoxyuridine 5'-triphosphate nucleotidohydrolase.